A 794-amino-acid polypeptide reads, in one-letter code: Signal transducer and activator of transcription 5A (794 aa).

Tyr-90 is modified (phosphotyrosine). At Ser-129 the chain carries Phosphoserine. The 98-residue stretch at 589 to 686 (WNDGAILGFV…EVFSKYYTPV (98 aa)) folds into the SH2 domain. At Tyr-682 the chain carries Phosphotyrosine. Residue Tyr-694 is modified to Phosphotyrosine; by JAK2. The interval 765-794 (EELLRRPNGQSGPLSPPPAGLFTPARGSLS) is disordered.

This sequence belongs to the transcription factor STAT family. As to quaternary structure, forms a homodimer or a heterodimer with a related family member. Binds NR3C1. Interacts with NCOA1 and SOCS7. Interacts with ERBB4. Interacts with EBF4. Interacts with CD69. Post-translationally, ISGylated. In terms of processing, tyrosine phosphorylated in response to KITLG/SCF, IL2, IL3, IL7, IL15, CSF2/GMCSF, GH1, PRL, EPO and THPO. Activated KIT promotes phosphorylation on tyrosine residues and subsequent translocation to the nucleus. Tyrosine phosphorylated in response to constitutively activated FGFR1, FGFR2, FGFR3 and FGFR4. Tyrosine phosphorylation is required for DNA-binding activity and dimerization. Serine phosphorylation is also required for maximal transcriptional activity. Tyrosine phosphorylated in response to signaling via activated FLT3; wild-type FLT3 results in much weaker phosphorylation than constitutively activated mutant FLT3. Alternatively, can be phosphorylated by JAK2 at Tyr-694. Found in mammary gland and, in lesser extent, in ovary, thymus, spleen, kidney, lung, muscle and adrenal gland.

The protein resides in the cytoplasm. Its subcellular location is the nucleus. In terms of biological role, carries out a dual function: signal transduction and activation of transcription. Mediates cellular responses to the cytokine KITLG/SCF and other growth factors. May mediate cellular responses to activated FGFR1, FGFR2, FGFR3 and FGFR4. Binds to the GAS element and activates PRL-induced transcription. Regulates the expression of milk proteins during lactation. This Ovis aries (Sheep) protein is Signal transducer and activator of transcription 5A (STAT5A).